We begin with the raw amino-acid sequence, 125 residues long: Holo-[acyl-carrier-protein] synthase (125 aa).

Residues Asp-8 and Glu-57 each contribute to the Mg(2+) site.

This sequence belongs to the P-Pant transferase superfamily. AcpS family. It depends on Mg(2+) as a cofactor.

The protein resides in the cytoplasm. It carries out the reaction apo-[ACP] + CoA = holo-[ACP] + adenosine 3',5'-bisphosphate + H(+). Functionally, transfers the 4'-phosphopantetheine moiety from coenzyme A to a Ser of acyl-carrier-protein. The polypeptide is Holo-[acyl-carrier-protein] synthase (Natranaerobius thermophilus (strain ATCC BAA-1301 / DSM 18059 / JW/NM-WN-LF)).